We begin with the raw amino-acid sequence, 232 residues long: Large ribosomal subunit protein uL1 (232 aa).

It belongs to the universal ribosomal protein uL1 family. Part of the 50S ribosomal subunit.

Functionally, binds directly to 23S rRNA. The L1 stalk is quite mobile in the ribosome, and is involved in E site tRNA release. In terms of biological role, protein L1 is also a translational repressor protein, it controls the translation of the L11 operon by binding to its mRNA. This Liberibacter asiaticus (Citrus greening disease) protein is Large ribosomal subunit protein uL1.